A 495-amino-acid chain; its full sequence is Monoamine oxidase N (495 aa).

Positions 1–19 (MTSRDGYQWTPETGLTQGV) are enriched in polar residues. A disordered region spans residues 1–23 (MTSRDGYQWTPETGLTQGVPSLG). Residues 493–495 (ARL) carry the Microbody targeting signal motif.

Belongs to the flavin monoamine oxidase family. Requires FAD as cofactor.

Its subcellular location is the peroxisome. It catalyses the reaction a secondary aliphatic amine + O2 + H2O = a primary amine + an aldehyde + H2O2. The sequence is that of Monoamine oxidase N (maoN) from Aspergillus niger.